We begin with the raw amino-acid sequence, 255 residues long: NAD kinase (255 aa).

Aspartate 44 acts as the Proton acceptor in catalysis. NAD(+) is bound by residues 44 to 45 (DG), histidine 49, 114 to 115 (NE), aspartate 144, alanine 152, 155 to 160 (SAYNLS), and glutamine 216.

This sequence belongs to the NAD kinase family. It depends on a divalent metal cation as a cofactor.

It localises to the cytoplasm. It carries out the reaction NAD(+) + ATP = ADP + NADP(+) + H(+). Functionally, involved in the regulation of the intracellular balance of NAD and NADP, and is a key enzyme in the biosynthesis of NADP. Catalyzes specifically the phosphorylation on 2'-hydroxyl of the adenosine moiety of NAD to yield NADP. The protein is NAD kinase of Rickettsia bellii (strain OSU 85-389).